A 363-amino-acid polypeptide reads, in one-letter code: 3-dehydroquinate synthase (363 aa).

Residues 134-135 (TT), K147, K156, and 174-177 (TLKT) contribute to the NAD(+) site. Residues E189, H254, and H271 each coordinate Zn(2+).

The protein belongs to the sugar phosphate cyclases superfamily. Dehydroquinate synthase family. Co(2+) serves as cofactor. Zn(2+) is required as a cofactor. The cofactor is NAD(+).

It is found in the cytoplasm. The enzyme catalyses 7-phospho-2-dehydro-3-deoxy-D-arabino-heptonate = 3-dehydroquinate + phosphate. It functions in the pathway metabolic intermediate biosynthesis; chorismate biosynthesis; chorismate from D-erythrose 4-phosphate and phosphoenolpyruvate: step 2/7. In terms of biological role, catalyzes the conversion of 3-deoxy-D-arabino-heptulosonate 7-phosphate (DAHP) to dehydroquinate (DHQ). The polypeptide is 3-dehydroquinate synthase (Prochlorococcus marinus (strain MIT 9515)).